The following is a 387-amino-acid chain: 4-hydroxy-3-methylbut-2-en-1-yl diphosphate synthase (flavodoxin) (387 aa).

Residues cysteine 280, cysteine 283, cysteine 315, and glutamate 322 each coordinate [4Fe-4S] cluster.

Belongs to the IspG family. [4Fe-4S] cluster serves as cofactor.

The enzyme catalyses (2E)-4-hydroxy-3-methylbut-2-enyl diphosphate + oxidized [flavodoxin] + H2O + 2 H(+) = 2-C-methyl-D-erythritol 2,4-cyclic diphosphate + reduced [flavodoxin]. It participates in isoprenoid biosynthesis; isopentenyl diphosphate biosynthesis via DXP pathway; isopentenyl diphosphate from 1-deoxy-D-xylulose 5-phosphate: step 5/6. Functionally, converts 2C-methyl-D-erythritol 2,4-cyclodiphosphate (ME-2,4cPP) into 1-hydroxy-2-methyl-2-(E)-butenyl 4-diphosphate. In Mycobacterium bovis (strain BCG / Pasteur 1173P2), this protein is 4-hydroxy-3-methylbut-2-en-1-yl diphosphate synthase (flavodoxin).